The primary structure comprises 479 residues: MGNYHIGDGECRFRVVCSSPDVCEVGGYKVPFDSYQTLDSERQYSSTVWARGCRALNVGSVIAGTQSNAGKGVISGTSQGTGDCVILTGSPTVTIEGKPVAYHGSVVGINNHNCLGKLYTKIKSPMISVIDRTFNYERTAEVIHDLLLLKDLLSVGNIFDGDISPEVKNDLFQIKDPDQSWGEFFSIKNIRESLRNGIEGDKSQIREWFGENTLTQMGNGAITTLHGVADLALVTFDALLDTATATVACPIGEDGLCEQANINLNEKEQALFNISNSLINGQAWDALKKMIMDTNNGDQIALEHFASFLWGFMIPAKIPEENISGKVFVEPVVLEGGAGGNWTVFDEVLDSNVIKQLTLTGCGAACGEMLLRDRYIFVTQNVIGTELTSMTSLANKLNKFDVGWEGNAVSESSLYALSNTGSWGAMMWDSGSKVGHWVLVKGVDDAGNVIIYDPYQGSRYLMTEQEFKEVWNGHSVYKP.

This is Cysteine protease effector 1 from Escherichia coli O1:K1:H7 (strain ATCC 11775 / DSM 30083 / JCM 1649 / NBRC 102203 / NCTC 9001 / U5/41).